Consider the following 451-residue polypeptide: Probable phosphoglucosamine mutase (451 aa).

Residue S96 is the Phosphoserine intermediate of the active site. Mg(2+) is bound by residues S96, D233, D235, and D237. Residue S96 is modified to Phosphoserine.

This sequence belongs to the phosphohexose mutase family. Mg(2+) serves as cofactor. Post-translationally, activated by phosphorylation.

The enzyme catalyses alpha-D-glucosamine 1-phosphate = D-glucosamine 6-phosphate. Functionally, catalyzes the conversion of glucosamine-6-phosphate to glucosamine-1-phosphate. In Pyrococcus horikoshii (strain ATCC 700860 / DSM 12428 / JCM 9974 / NBRC 100139 / OT-3), this protein is Probable phosphoglucosamine mutase.